A 338-amino-acid polypeptide reads, in one-letter code: MNSLVIQTTIVLVSVISVSIVHAGNIPAVIAFGDSILDTGNNNYLMTLTKVNFYPYGRDFVTRRATGRFGNGRIPTDLIAEGLGIKNIVPAYRSPFLEPNDILTGVSFASGGSGLDPMTARIQGVIWVPDQLNDFKAYIAKLNSITGDEEKTRSIISNAVFVISAGNNDIAITYFTNPIRNTRYTIFSYTDLMVSWTQSFIKELYNLGARKFAIMGTLPLGCLPGASNALGGLCLEPANAVARLFNRKLADEVNNLNSMLPGSRSIYVDMYNPLLELVKNPLRSGFISPTRPCCCAPAAPIPCLDASRYVFWDIAHPSEKAYQTIIPPIIQQIQQSFA.

The N-terminal stretch at 1–23 (MNSLVIQTTIVLVSVISVSIVHA) is a signal peptide. S35 functions as the Nucleophile in the catalytic mechanism. Catalysis depends on residues D313 and H316.

The protein belongs to the 'GDSL' lipolytic enzyme family.

It is found in the secreted. This is GDSL esterase/lipase At5g63170 from Arabidopsis thaliana (Mouse-ear cress).